We begin with the raw amino-acid sequence, 54 residues long: Ovomucoid (54 aa).

Residues 4–54 (VDCSEYPKPVCSPEYMPLCGSDSKTYNNKCDFCSAVVESNGTLTLGHFGKC) enclose the Kazal-like domain. Disulfide bonds link Cys-6/Cys-36, Cys-14/Cys-33, and Cys-22/Cys-54. Asn-43 carries N-linked (GlcNAc...) asparagine glycosylation.

Its subcellular location is the secreted. The polypeptide is Ovomucoid (Casuarius casuarius (Southern cassowary)).